A 509-amino-acid chain; its full sequence is Ribonuclease Y (509 aa).

Residues 3 to 23 (WILYVILPAVCIILGWTIRWL) traverse the membrane as a helical segment. The 86-residue stretch at 199-284 (TVSTVSLPSD…EIVQKVTREI (86 aa)) folds into the KH domain. An HD domain is found at 325–418 (VLQHSKEVAI…VQIADAISAA (94 aa)).

It belongs to the RNase Y family.

The protein localises to the cell membrane. In terms of biological role, endoribonuclease that initiates mRNA decay. In Treponema denticola (strain ATCC 35405 / DSM 14222 / CIP 103919 / JCM 8153 / KCTC 15104), this protein is Ribonuclease Y.